The chain runs to 279 residues: Vomeronasal type-1 receptor A8 (279 aa).

Residues 1-19 are Extracellular-facing; the sequence is MNKDHTLYCSVYIRNAFFS. A helical membrane pass occupies residues 20-40; that stretch reads EIGIGISANSCLLLFHTFMFI. Topologically, residues 41–49 are cytoplasmic; the sequence is RGHRPRLTD. The chain crosses the membrane as a helical span at residues 50-70; the sequence is LPIGFVALIHLVMLLLAAYIT. The Extracellular segment spans residues 71–93; it reads EDFFMSSGGWDDITCKLVIFLHR. Cysteines 85 and 172 form a disulfide. Residues 94–114 traverse the membrane as a helical segment; that stretch reads FFRSLSVCATCLLSVFQAIIL. Over 115-134 the chain is Cytoplasmic; sequence CPQSSHLAKLKQNSPHQLSY. A helical membrane pass occupies residues 135–155; sequence FFIFLSIFYTSISSQILIAAI. Over 156-159 the chain is Extracellular; it reads PTQN. N-linked (GlcNAc...) asparagine glycosylation occurs at Asn159. The chain crosses the membrane as a helical span at residues 160-180; sequence ITFVNLIYITNSCSFLPLSSS. Over 181–187 the chain is Cytoplasmic; sequence MQHTFST. The helical transmembrane segment at 188–208 threads the bilayer; sequence LLTFRNVFVIGLMGLSTCYMA. At 209–238 the chain is on the extracellular side; sequence TLLCRHKTRSQRLQNSKLSPKATPEQRALR. Residues 239-259 form a helical membrane-spanning segment; sequence TILMLMSFFLLMSTFDSIISY. Topologically, residues 260 to 279 are cytoplasmic; the sequence is SRTIITGKSTALLCPDSCRS.

The protein belongs to the G-protein coupled receptor 1 family. As to expression, expressed in a subset of sensory neurons located in the apical layer of the vomeronasal organ.

It is found in the cell membrane. Putative pheromone receptor implicated in the regulation of social and reproductive behavior. This is Vomeronasal type-1 receptor A8 from Mus musculus (Mouse).